Consider the following 275-residue polypeptide: Subtilisin (275 aa).

Ca(2+) is bound at residue Gln2. The Peptidase S8 domain occupies 5–274 (PYGISQIKAP…KGLINVQAAA (270 aa)). Asp32 serves as the catalytic Charge relay system. Position 41 (Asp41) interacts with Ca(2+). His64 serves as the catalytic Charge relay system. Leu75, Asn77, Ile79, Val81, Ala169, Tyr171, and Thr174 together coordinate Ca(2+). Catalysis depends on Ser221, which acts as the Charge relay system.

This sequence belongs to the peptidase S8 family. Requires Ca(2+) as cofactor.

It localises to the secreted. The catalysed reaction is Hydrolysis of proteins with broad specificity for peptide bonds, and a preference for a large uncharged residue in P1. Hydrolyzes peptide amides.. Subtilisin is an extracellular alkaline serine protease, it catalyzes the hydrolysis of proteins and peptide amides. The polypeptide is Subtilisin (apr) (Bacillus pumilus (Bacillus mesentericus)).